The sequence spans 480 residues: 2-succinylbenzoate--CoA ligase (480 aa).

The protein belongs to the ATP-dependent AMP-binding enzyme family. MenE subfamily.

The enzyme catalyses 2-succinylbenzoate + ATP + CoA = 2-succinylbenzoyl-CoA + AMP + diphosphate. The protein operates within quinol/quinone metabolism; 1,4-dihydroxy-2-naphthoate biosynthesis; 1,4-dihydroxy-2-naphthoate from chorismate: step 5/7. It functions in the pathway quinol/quinone metabolism; menaquinone biosynthesis. In terms of biological role, converts 2-succinylbenzoate (OSB) to 2-succinylbenzoyl-CoA (OSB-CoA). The protein is 2-succinylbenzoate--CoA ligase of Oceanobacillus iheyensis (strain DSM 14371 / CIP 107618 / JCM 11309 / KCTC 3954 / HTE831).